Here is an 853-residue protein sequence, read N- to C-terminus: Envelope glycoprotein gp160 (853 aa).

A signal peptide spans 1 to 31 (MRVKEIRKNWQHLRGGILLLGMLMICSAAKE). Residues 32–681 (KTWVTIYYGV…ITNWLWYIRL (650 aa)) are Extracellular-facing. Residues Cys-53 and Cys-73 are joined by a disulfide bond. 19 N-linked (GlcNAc...) asparagine; by host glycosylation sites follow: Asn-87, Asn-129, Asn-134, Asn-138, Asn-157, Asn-189, Asn-199, Asn-232, Asn-236, Asn-243, Asn-264, Asn-278, Asn-291, Asn-297, Asn-303, Asn-333, Asn-340, Asn-356, and Asn-362. Disulfide bonds link Cys-118/Cys-207, Cys-125/Cys-198, Cys-130/Cys-158, Cys-220/Cys-249, and Cys-230/Cys-241. A V1 region spans residues 130–157 (CTNLNITKNTTNPTSSSWGMMEKGEIKN). A V2 region spans residues 158–198 (CSFYITTSIRNKVKKEYALFNRLDVVPIENTNNTKYRLISC). A V3 region spans residues 298-331 (CTRPNNNTRRRLSIGPGRAFYARRNIIGDIRQAH). Residues Cys-298 and Cys-332 are joined by a disulfide bond. The CD4-binding loop stretch occupies residues 364–374 (SSGGDPEIVMH). 2 cysteine pairs are disulfide-bonded: Cys-378-Cys-441 and Cys-385-Cys-414. Residues 385–414 (CNTAQLFNSTWNVTGGTNGTEGNDIITLQC) form a V4 region. N-linked (GlcNAc...) asparagine; by host glycosylation is found at Asn-392, Asn-396, Asn-402, Asn-444, and Asn-456. The tract at residues 459–468 (ETETEIFRPG) is V5. The fusion peptide stretch occupies residues 509 to 529 (AVGIGAVFLGFLGAAGSTMGA). Residues 571–589 (KQLQARVLALERYLRDQQL) form an immunosuppression region. The cysteines at positions 595 and 601 are disulfide-linked. N-linked (GlcNAc...) asparagine; by host glycosylation is found at Asn-608, Asn-613, Asn-622, and Asn-634. Residues 630–664 (REIDNYTDYIYDLLEKSQTQQEKNEKELLELDKWA) adopt a coiled-coil conformation. The interval 659–680 (ELDKWASLWNWFDITNWLWYIR) is MPER; binding to GalCer. A helical membrane pass occupies residues 682-702 (FIMIVGGLIGLRIVFAVLSIV). Over 703-853 (NRVRQGYSPL…IRQGLERALL (151 aa)) the chain is Cytoplasmic. The short motif at 709–712 (YSPL) is the YXXL motif; contains endocytosis signal element. Residues 718–740 (LPASRGPDRPEGTEEEGGERDRD) are disordered. 2 S-palmitoyl cysteine; by host lipidation sites follow: Cys-761 and Cys-834. A Di-leucine internalization motif motif is present at residues 852–853 (LL).

The protein belongs to the HIV-1 env protein family. As to quaternary structure, the mature envelope protein (Env) consists of a homotrimer of non-covalently associated gp120-gp41 heterodimers. The resulting complex protrudes from the virus surface as a spike. There seems to be as few as 10 spikes on the average virion. Interacts with host CD4, CCR5 and CXCR4. Gp120 also interacts with the C-type lectins CD209/DC-SIGN and CLEC4M/DC-SIGNR (collectively referred to as DC-SIGN(R)). Gp120 and gp41 interact with GalCer. Gp120 interacts with host ITGA4/ITGB7 complex; on CD4+ T-cells, this interaction results in rapid activation of integrin ITGAL/LFA-1, which facilitates efficient cell-to-cell spreading of HIV-1. Gp120 interacts with cell-associated heparan sulfate; this interaction increases virus infectivity on permissive cells and may be involved in infection of CD4- cells. The mature envelope protein (Env) consists of a homotrimer of non-covalently associated gp120-gp41 heterodimers. The resulting complex protrudes from the virus surface as a spike. There seems to be as few as 10 spikes on the average virion. Highly glycosylated by host. The high number of glycan on the protein is reffered to as 'glycan shield' because it contributes to hide protein sequence from adaptive immune system. In terms of processing, palmitoylation of the transmembrane protein and of Env polyprotein (prior to its proteolytic cleavage) is essential for their association with host cell membrane lipid rafts. Palmitoylation is therefore required for envelope trafficking to classical lipid rafts, but not for viral replication. Post-translationally, specific enzymatic cleavages in vivo yield mature proteins. Envelope glycoproteins are synthesized as an inactive precursor that is heavily N-glycosylated and processed likely by host cell furin in the Golgi to yield the mature SU and TM proteins. The cleavage site between SU and TM requires the minimal sequence [KR]-X-[KR]-R. About 2 of the 9 disulfide bonds of gp41 are reduced by P4HB/PDI, following binding to CD4 receptor.

It localises to the virion membrane. The protein localises to the host cell membrane. It is found in the host endosome membrane. Its function is as follows. Oligomerizes in the host endoplasmic reticulum into predominantly trimers. In a second time, gp160 transits in the host Golgi, where glycosylation is completed. The precursor is then proteolytically cleaved in the trans-Golgi and thereby activated by cellular furin or furin-like proteases to produce gp120 and gp41. In terms of biological role, attaches the virus to the host lymphoid cell by binding to the primary receptor CD4. This interaction induces a structural rearrangement creating a high affinity binding site for a chemokine coreceptor like CXCR4 and/or CCR5. Acts as a ligand for CD209/DC-SIGN and CLEC4M/DC-SIGNR, which are respectively found on dendritic cells (DCs), and on endothelial cells of liver sinusoids and lymph node sinuses. These interactions allow capture of viral particles at mucosal surfaces by these cells and subsequent transmission to permissive cells. HIV subverts the migration properties of dendritic cells to gain access to CD4+ T-cells in lymph nodes. Virus transmission to permissive T-cells occurs either in trans (without DCs infection, through viral capture and transmission), or in cis (following DCs productive infection, through the usual CD4-gp120 interaction), thereby inducing a robust infection. In trans infection, bound virions remain infectious over days and it is proposed that they are not degraded, but protected in non-lysosomal acidic organelles within the DCs close to the cell membrane thus contributing to the viral infectious potential during DCs' migration from the periphery to the lymphoid tissues. On arrival at lymphoid tissues, intact virions recycle back to DCs' cell surface allowing virus transmission to CD4+ T-cells. Functionally, acts as a class I viral fusion protein. Under the current model, the protein has at least 3 conformational states: pre-fusion native state, pre-hairpin intermediate state, and post-fusion hairpin state. During fusion of viral and target intracellular membranes, the coiled coil regions (heptad repeats) assume a trimer-of-hairpins structure, positioning the fusion peptide in close proximity to the C-terminal region of the ectodomain. The formation of this structure appears to drive apposition and subsequent fusion of viral and target cell membranes. Complete fusion occurs in host cell endosomes and is dynamin-dependent, however some lipid transfer might occur at the plasma membrane. The virus undergoes clathrin-dependent internalization long before endosomal fusion, thus minimizing the surface exposure of conserved viral epitopes during fusion and reducing the efficacy of inhibitors targeting these epitopes. Membranes fusion leads to delivery of the nucleocapsid into the cytoplasm. The polypeptide is Envelope glycoprotein gp160 (Human immunodeficiency virus type 1 group M subtype B (strain 89.6) (HIV-1)).